The following is a 294-amino-acid chain: Bifunctional protein FolD (294 aa).

NADP(+)-binding positions include 166–168 (GRS), Ser191, and Ile232.

It belongs to the tetrahydrofolate dehydrogenase/cyclohydrolase family. Homodimer.

The enzyme catalyses (6R)-5,10-methylene-5,6,7,8-tetrahydrofolate + NADP(+) = (6R)-5,10-methenyltetrahydrofolate + NADPH. The catalysed reaction is (6R)-5,10-methenyltetrahydrofolate + H2O = (6R)-10-formyltetrahydrofolate + H(+). The protein operates within one-carbon metabolism; tetrahydrofolate interconversion. Catalyzes the oxidation of 5,10-methylenetetrahydrofolate to 5,10-methenyltetrahydrofolate and then the hydrolysis of 5,10-methenyltetrahydrofolate to 10-formyltetrahydrofolate. The polypeptide is Bifunctional protein FolD (Nitrobacter hamburgensis (strain DSM 10229 / NCIMB 13809 / X14)).